The sequence spans 768 residues: MKSITKIFLILGLFAFLLVAFAPSSSVATVNLESDGYTEAEAKLIEEKGEKFTFQTEVNKLMNIIINSLYSKKEIFLRELISNASDALDKIRFLALTNADLLGEGEQSNLDIHIKIDKANNVLHITDRGVGMTKDELVRNLGTIAQSGTKEFIKKVSDSAESSNLIGQFGVGFYSLFLVADSVVVTSKSNDDDQYVWTSDSQSSYTIAKDPKGNTLGRGTRISLHIKDDSKEFLDQEVIKQLVKKYSQFINFPIYLYVSEEVEIPKEEQEDSKPITDDQVEETTTTTEEGEEETTTEEEGQTEEKKTKTVYKWEELNDSKPLWMKAAKDVTKEEYTEFFRSLSKTQDTPITYSHFKTEGDTEFRSILYIPENPPSNMFDLEAAGSGLKLFVRRVFITDNLKELVPNWLRFLVGVIDSDDLPLNVSREMLQQNKILDAIKKKVILVKFISMIKELSEDEDKTKYNEFFKKFGSSMKLGAIEDQANKKRLTKYLLFPSSKEELTTFAGYVERMKEGQDQIYFITGKSKDSVEASPLIEQAIKKGYEVLFLVDPIDEYLVPQLDKFDDKYKFTNLARSGVKFNEDKEEEDQRKQTAEEFKPLLSYLKKTLSDKLEKVVISKVLADSPSILVSNSWGVTANQERIMKAQAHQANAQPQFNSKKIMEINPSHPLIKKLLNRLNEFGEEDETTKVSAHVLYETSALTAGYSIDNPTNFADFIYKLMMINGDSLAQTNFETTKNENSGPSVSFGDDDENQQQDFQQPPQSTHDEL.

The N-terminal stretch at 1-28 (MKSITKIFLILGLFAFLLVAFAPSSSVA) is a signal peptide. Residues N83, D127, N140, and F173 each contribute to the ATP site. A glycan (N-linked (GlcNAc...) asparagine) is linked at N83. A compositionally biased stretch (basic and acidic residues) spans 266–276 (KEEQEDSKPIT). Positions 266–308 (KEEQEDSKPITDDQVEETTTTTEEGEEETTTEEEGQTEEKKTK) are disordered. Residues 288 to 301 (EEGEEETTTEEEGQ) show a composition bias toward acidic residues. N317 and N423 each carry an N-linked (GlcNAc...) asparagine glycan. Positions 733–743 (ETTKNENSGPS) are enriched in polar residues. Residues 733–768 (ETTKNENSGPSVSFGDDDENQQQDFQQPPQSTHDEL) are disordered. A Prevents secretion from ER motif is present at residues 765-768 (HDEL).

Belongs to the heat shock protein 90 family. Post-translationally, phosphorylated.

Its subcellular location is the endoplasmic reticulum. It localises to the golgi apparatus. Its function is as follows. May play a role in late differentiation as well as in starvation response. When overexpressed, suppresses the ability to form normal fruiting bodies and impairs prespore differentiation as well as maturation into spores. The polypeptide is Endoplasmin homolog (grp94) (Dictyostelium discoideum (Social amoeba)).